We begin with the raw amino-acid sequence, 109 residues long: Cytochrome c oxidase subunit 6A1, mitochondrial (109 aa).

A mitochondrion-targeting transit peptide spans 1 to 24 (MAAAAGSRVFGLLGRSRLQLSRCM). Over 25–34 (SSGAHGEEGS) the chain is Mitochondrial matrix. The chain crosses the membrane as a helical span at residues 35-59 (ARMWKALTYFVALPGVGVSMLNVFL). At 60-109 (KSHHGEEERPEFVAYPHLRIRSKPFPWGDGNHTLFHNPHVNPLPTGYEDE) the chain is on the mitochondrial intermembrane side.

It belongs to the cytochrome c oxidase subunit 6A family. Component of the cytochrome c oxidase (complex IV, CIV), a multisubunit enzyme composed of 14 subunits. The complex is composed of a catalytic core of 3 subunits MT-CO1, MT-CO2 and MT-CO3, encoded in the mitochondrial DNA, and 11 supernumerary subunits COX4I1 (or COX4I2), COX5A, COX5B, COX6A2 (or COX6A1), COX6B1 (or COX6B2), COX6C, COX7A1 (or COX7A2), COX7B, COX7C, COX8B and NDUFA4, which are encoded in the nuclear genome. The complex exists as a monomer or a dimer and forms supercomplexes (SCs) in the inner mitochondrial membrane with NADH-ubiquinone oxidoreductase (complex I, CI) and ubiquinol-cytochrome c oxidoreductase (cytochrome b-c1 complex, complex III, CIII), resulting in different assemblies (supercomplex SCI(1)III(2)IV(1) and megacomplex MCI(2)III(2)IV(2)).

Its subcellular location is the mitochondrion inner membrane. It functions in the pathway energy metabolism; oxidative phosphorylation. Its function is as follows. Component of the cytochrome c oxidase, the last enzyme in the mitochondrial electron transport chain which drives oxidative phosphorylation. The respiratory chain contains 3 multisubunit complexes succinate dehydrogenase (complex II, CII), ubiquinol-cytochrome c oxidoreductase (cytochrome b-c1 complex, complex III, CIII) and cytochrome c oxidase (complex IV, CIV), that cooperate to transfer electrons derived from NADH and succinate to molecular oxygen, creating an electrochemical gradient over the inner membrane that drives transmembrane transport and the ATP synthase. Cytochrome c oxidase is the component of the respiratory chain that catalyzes the reduction of oxygen to water. Electrons originating from reduced cytochrome c in the intermembrane space (IMS) are transferred via the dinuclear copper A center (CU(A)) of subunit 2 and heme A of subunit 1 to the active site in subunit 1, a binuclear center (BNC) formed by heme A3 and copper B (CU(B)). The BNC reduces molecular oxygen to 2 water molecules unsing 4 electrons from cytochrome c in the IMS and 4 protons from the mitochondrial matrix. The polypeptide is Cytochrome c oxidase subunit 6A1, mitochondrial (COX6A1) (Bos taurus (Bovine)).